A 503-amino-acid polypeptide reads, in one-letter code: Nuclear respiratory factor 1 (503 aa).

Residues 1-78 (MEEHGVTQTE…AHLAAAGPVG (78 aa)) are dimerization. A disordered region spans residues 36–57 (SMLSADEDSPSSPEDTSYDDSD). S39, S44, S46, S47, and S52 each carry phosphoserine; by CK2. The short motif at 88–116 (GKKRKRPHVFESNPSIRKRQQTRLLRKLR) is the Nuclear localization signal element. The DNA-binding element occupies 109–305 (TRLLRKLRAT…SIAHLVPSQT (197 aa)). K139 is covalently cross-linked (Glycyl lysine isopeptide (Lys-Gly) (interchain with G-Cter in SUMO2)). The required for transcriptional activation stretch occupies residues 301 to 476 (VPSQTVVQTF…AQGNGPVQVA (176 aa)).

It belongs to the NRF1/Ewg family. In terms of assembly, homodimer. Binds DNA as a dimer. Interacts with PPRC1. Phosphorylation enhances DNA binding. Widely expressed in embryonic, fetal, and adult tissues.

It is found in the nucleus. Transcription factor that activates the expression of the EIF2S1 (EIF2-alpha) gene. Links the transcriptional modulation of key metabolic genes to cellular growth and development. Implicated in the control of nuclear genes required for respiration, heme biosynthesis, and mitochondrial DNA transcription and replication. The sequence is that of Nuclear respiratory factor 1 (Nrf1) from Mus musculus (Mouse).